A 977-amino-acid chain; its full sequence is Synaptopodin 2-like protein (977 aa).

The 83-residue stretch at 6–88 folds into the PDZ domain; sequence EVLVTLSGGA…QLVLTVQRLA (83 aa). 3 disordered regions span residues 91–226, 317–352, and 364–677; these read GPVQ…GPLR, AGTGAEEEDGVPPTSESELDEEAFSDARSLTNQSDW, and AGSR…EDAL. Residues serine 108 and serine 111 each carry the phosphoserine modification. Pro residues predominate over residues 109 to 123; that stretch reads PLSPEPPGAPVPQPL. A Phosphothreonine modification is found at threonine 141. A phosphoserine mark is found at serine 143, serine 178, and serine 180. Residues 183 to 192 show a composition bias toward pro residues; sequence EPAPTIPGPP. Positions 194 to 203 are enriched in polar residues; that stretch reads QGDSRVSSPS. Residues 216 to 226 show a composition bias toward low complexity; sequence EALLLPHGPLR. Phosphoserine is present on residues serine 345, serine 350, serine 374, serine 381, and serine 384. Arginine 386 carries the omega-N-methylarginine modification. The span at 436–450 shows a compositional bias: pro residues; sequence PPSPLPAPVASPRPF. Arginine 466, arginine 469, and arginine 479 each carry omega-N-methylarginine. Polar residues predominate over residues 510-525; sequence LSSQGPTPLPSFTSGV. Low complexity-rich tracts occupy residues 530 to 545 and 572 to 595; these read PVSGSPSTPRSSGPVT and SAAAMTSTASIFLSAPLRPSARPE. Positions 596 to 607 are enriched in pro residues; that stretch reads APAPGPGAPEPP. A phosphoserine mark is found at serine 670 and serine 678. The tract at residues 697–802 is disordered; the sequence is TLPHVTPKTP…PSLPPSWKYS (106 aa). Pro residues predominate over residues 704–730; sequence KTPPPMAPKTPPPMTPKTPPPVAPKPP. Phosphothreonine occurs at positions 705 and 713. Residue arginine 757 is modified to Omega-N-methylarginine. A compositionally biased stretch (pro residues) spans 781–796; it reads GLGPRPRSPSPTPSLP. Phosphoserine occurs at positions 788 and 790. Phosphothreonine is present on threonine 792. Arginine 806, arginine 826, and arginine 889 each carry omega-N-methylarginine. Serine 891 bears the Phosphoserine mark. Residues threonine 892 and threonine 898 each carry the phosphothreonine modification. Arginine 910 is subject to Omega-N-methylarginine. Arginine 921 is modified (asymmetric dimethylarginine; alternate). Arginine 921 is modified (omega-N-methylarginine; alternate). Residues 922 to 950 form a disordered region; that stretch reads TELASAPVPSPAPPPEAPRGLGASPSSCG. The span at 929–938 shows a compositional bias: pro residues; it reads VPSPAPPPEA. An omega-N-methylarginine mark is found at arginine 955 and arginine 957.

Belongs to the synaptopodin family.

It is found in the cytoplasm. The protein localises to the cytoskeleton. Actin-associated protein that may play a role in modulating actin-based shape. The chain is Synaptopodin 2-like protein (SYNPO2L) from Homo sapiens (Human).